Here is a 116-residue protein sequence, read N- to C-terminus: Integration host factor subunit alpha (116 aa).

Disordered regions lie at residues 58–80 (FGNF…GETI) and 94–116 (QKLK…EAAE). Residues 94–105 (QKLKSTVEQSGN) show a composition bias toward polar residues.

The protein belongs to the bacterial histone-like protein family. As to quaternary structure, heterodimer of an alpha and a beta chain.

In terms of biological role, this protein is one of the two subunits of integration host factor, a specific DNA-binding protein that functions in genetic recombination as well as in transcriptional and translational control. This Bordetella avium (strain 197N) protein is Integration host factor subunit alpha.